A 405-amino-acid chain; its full sequence is DNA primase DnaG (405 aa).

The Toprim domain occupies 172–248; that stretch reads DAIIIVEGRA…HVDYIARAPP (77 aa). Mg(2+) contacts are provided by glutamate 178, aspartate 222, and aspartate 224. The segment at 279 to 303 is disordered; it reads ASGERAEAPPQPAQQPQQEQPAPQR. Residues 292-303 are compositionally biased toward low complexity; the sequence is QQPQQEQPAPQR.

The protein belongs to the archaeal DnaG primase family. As to quaternary structure, forms a ternary complex with MCM helicase and DNA. Component of the archaeal exosome complex. Mg(2+) is required as a cofactor.

It carries out the reaction ssDNA + n NTP = ssDNA/pppN(pN)n-1 hybrid + (n-1) diphosphate.. Functionally, RNA polymerase that catalyzes the synthesis of short RNA molecules used as primers for DNA polymerase during DNA replication. Also part of the exosome, which is a complex involved in RNA degradation. Acts as a poly(A)-binding protein that enhances the interaction between heteromeric, adenine-rich transcripts and the exosome. This chain is DNA primase DnaG, found in Pyrobaculum arsenaticum (strain DSM 13514 / JCM 11321 / PZ6).